The sequence spans 603 residues: Deuterosome assembly protein 1 (603 aa).

Coiled-coil stretches lie at residues 14 to 59, 85 to 197, 227 to 278, 336 to 399, and 454 to 480; these read CEAE…NAQT, MTQN…GKKQ, IEKL…ELQS, QDQP…KQLK, and HTSINKLEYENERLRNDLAKLRVNGKS. The residue at position 546 (Ser546) is a Phosphoserine. The stretch at 557–600 forms a coiled coil; sequence AAQHFLLEEEKRAKELEKLLNTHIDELQRHTEFTLNKYSKLKQN.

It belongs to the CEP63 family. In terms of assembly, interacts with CEP152; the interaction is mutually exclusive with CEP63.

The protein resides in the cytoplasm. Key structural component of the deuterosome, a structure that promotes de novo centriole amplification in multiciliated cells. Deuterosome-mediated centriole amplification occurs in terminally differentiated multiciliated cells and can generate more than 100 centrioles. Probably sufficient for the specification and formation of the deuterosome inner core. Interacts with CEP152 and recruits PLK4 to activate centriole biogenesis. The sequence is that of Deuterosome assembly protein 1 from Macaca fascicularis (Crab-eating macaque).